Reading from the N-terminus, the 39-residue chain is Photosystem II reaction center protein X (39 aa).

Residues 10 to 30 (WSLVLGAAIVLIPATIGLIFI) form a helical membrane-spanning segment.

Belongs to the PsbX family. Type 1 subfamily. In terms of assembly, PSII is composed of 1 copy each of membrane proteins PsbA, PsbB, PsbC, PsbD, PsbE, PsbF, PsbH, PsbI, PsbJ, PsbK, PsbL, PsbM, PsbT, PsbX, PsbY, PsbZ, Psb30/Ycf12, peripheral proteins PsbO, CyanoQ (PsbQ), PsbU, PsbV and a large number of cofactors. It forms dimeric complexes.

Its subcellular location is the cellular thylakoid membrane. Functionally, involved in the binding and/or turnover of quinones at the Q(B) site of photosystem II (PSII). PSII is a light-driven water plastoquinone oxidoreductase, using light energy to abstract electrons from H(2)O, generating a proton gradient subsequently used for ATP formation. In Microcystis aeruginosa (strain NIES-843 / IAM M-2473), this protein is Photosystem II reaction center protein X.